The primary structure comprises 368 residues: Quinolinate synthase (368 aa).

Residues histidine 46 and serine 63 each coordinate iminosuccinate. Cysteine 110 serves as a coordination point for [4Fe-4S] cluster. Residues 141 to 143 (YVN) and serine 162 each bind iminosuccinate. Cysteine 230 is a binding site for [4Fe-4S] cluster. Iminosuccinate contacts are provided by residues 256-258 (HPE) and threonine 273. Cysteine 320 contacts [4Fe-4S] cluster.

Belongs to the quinolinate synthase family. Type 3 subfamily. As to quaternary structure, homotrimer. The cofactor is [4Fe-4S] cluster.

The protein localises to the cytoplasm. It catalyses the reaction iminosuccinate + dihydroxyacetone phosphate = quinolinate + phosphate + 2 H2O + H(+). It functions in the pathway cofactor biosynthesis; NAD(+) biosynthesis; quinolinate from iminoaspartate: step 1/1. Its function is as follows. Catalyzes the condensation of iminoaspartate with dihydroxyacetone phosphate to form quinolinate. The polypeptide is Quinolinate synthase (Bacillus subtilis (strain 168)).